The sequence spans 311 residues: MQRFIKWLAVITSLDLLIVLLGGALVTKTGSGQGCGKSWPLCNGEFVPSNLSMETIIELSHRLTSGSAGILVTLLCILSWKYYKHVRETKTLAILSFVFLVAQALMGAAAVVWGQMPAVLAIHFGISLISFASVILLTCLIFEIDQKFDARSLIMDKKMKFHIYGVTIYSYIVVYTGALVRHERASLACPDFPLCSKNRPMPTQLHEWVQMGHRVAAMLIFAWILYAMILAIRHYKQQPVVYWGWIISFILVTLQAVVGVLVVFTNASLAMALLHSLFISCLFAVLCYLVMLGTRSKVNAKEAELTSKQTK.

Residues 1-6 (MQRFIK) lie on the Cytoplasmic side of the membrane. Residues 7–27 (WLAVITSLDLLIVLLGGALVT) traverse the membrane as a helical segment. Residues 28-62 (KTGSGQGCGKSWPLCNGEFVPSNLSMETIIELSHR) lie on the Extracellular side of the membrane. Cysteines 35 and 42 form a disulfide. E58 is a catalytic residue. Residue H61 coordinates heme o. A helical transmembrane segment spans residues 63–83 (LTSGSAGILVTLLCILSWKYY). At 84 to 91 (KHVRETKT) the chain is on the cytoplasmic side. The chain crosses the membrane as a helical span at residues 92-112 (LAILSFVFLVAQALMGAAAVV). Over 113 to 121 (WGQMPAVLA) the chain is Extracellular. Residues 122 to 142 (IHFGISLISFASVILLTCLIF) traverse the membrane as a helical segment. H123 is a binding site for heme o. The Cytoplasmic portion of the chain corresponds to 143–159 (EIDQKFDARSLIMDKKM). A helical membrane pass occupies residues 160 to 180 (KFHIYGVTIYSYIVVYTGALV). Residues 181 to 211 (RHERASLACPDFPLCSKNRPMPTQLHEWVQM) are Extracellular-facing. The cysteines at positions 189 and 195 are disulfide-linked. A helical transmembrane segment spans residues 212 to 232 (GHRVAAMLIFAWILYAMILAI). H213 contributes to the heme b binding site. Over 233–243 (RHYKQQPVVYW) the chain is Cytoplasmic. The chain crosses the membrane as a helical span at residues 244–264 (GWIISFILVTLQAVVGVLVVF). At 265–271 (TNASLAM) the chain is on the extracellular side. A helical membrane pass occupies residues 272–292 (ALLHSLFISCLFAVLCYLVML). H275 contacts heme b. At 293–311 (GTRSKVNAKEAELTSKQTK) the chain is on the cytoplasmic side.

Belongs to the COX15/CtaA family. Type 1 subfamily. As to quaternary structure, interacts with CtaB. Requires heme b as cofactor.

Its subcellular location is the cell membrane. The enzyme catalyses Fe(II)-heme o + 2 A + H2O = Fe(II)-heme a + 2 AH2. It participates in porphyrin-containing compound metabolism; heme A biosynthesis; heme A from heme O: step 1/1. Its function is as follows. Catalyzes the conversion of heme O to heme A by two successive hydroxylations of the methyl group at C8. The first hydroxylation forms heme I, the second hydroxylation results in an unstable dihydroxymethyl group, which spontaneously dehydrates, resulting in the formyl group of heme A. This chain is Heme A synthase, found in Bacillus cereus (strain ATCC 14579 / DSM 31 / CCUG 7414 / JCM 2152 / NBRC 15305 / NCIMB 9373 / NCTC 2599 / NRRL B-3711).